The chain runs to 121 residues: Putative membrane protein insertion efficiency factor (121 aa).

The protein belongs to the UPF0161 family.

It localises to the cell inner membrane. In terms of biological role, could be involved in insertion of integral membrane proteins into the membrane. This Rhodopseudomonas palustris (strain HaA2) protein is Putative membrane protein insertion efficiency factor.